Here is a 557-residue protein sequence, read N- to C-terminus: MSQYAPFVKPYIEYNEFGWGPSDLPDLEVPYQPFCKGDRLGKISDWTTPVQERKYNNNKYMSTFGSSNSQYAYFHGNDDASFHLVNGNNMRALKPYQRNRYRPTQRNNLRLHGRNGRFNAAIGAGHGGAGAAGGAGASNKYGKGRDMRRGQTGRRFMRAAPVRQRQSSVVVRSDWVSIEEIDFPRLLKLTLPNIQEGADLITCGTLEFFDKQCDRINVKNERPLQKIDRIINVPGTIDDPIIRRLSKSLGNVFATDDIIATLMCCTRSNYSWDIVIDKVGTKLFLDKRDNAQFDMLTVNETALEPPLEEEGSINSPQSLSLEATIINHNFSQQVLKIGELEPKHKFDEPNPFEEPGVELASIGYRYKQWQLGDDMVLVARCKHNGVLRSPGGELQFLSIRALNEWDSKAANSVEWRQKLDSQRGAVLASELRNNACKLAKWTVEAVLAGSDQLKLGYVSRLNRKDHLHHVILGMQQFKPQEFATQINLNMDNAWGVLRCLVDIMLKQPDGKYLIMKDPNKPMIRLYDIPENAFDSDNNDGEETSDDRPFLNSKDNKL.

The segment at 292–306 is RNA gate; that stretch reads QFDMLTVNETALEPP. Positions 533-557 are disordered; it reads FDSDNNDGEETSDDRPFLNSKDNKL. Basic and acidic residues predominate over residues 545–557; that stretch reads DDRPFLNSKDNKL.

Belongs to the eIF-3 subunit D family. Component of the eukaryotic translation initiation factor 3 (eIF-3) complex. The eIF-3 complex interacts with pix.

It is found in the cytoplasm. Its function is as follows. mRNA cap-binding component of the eukaryotic translation initiation factor 3 (eIF-3) complex, which is involved in protein synthesis of a specialized repertoire of mRNAs and, together with other initiation factors, stimulates binding of mRNA and methionyl-tRNAi to the 40S ribosome. The eIF-3 complex specifically targets and initiates translation of a subset of mRNAs involved in cell proliferation. In the eIF-3 complex, eif3d specifically recognizes and binds the 7-methylguanosine cap of a subset of mRNAs. This is Eukaryotic translation initiation factor 3 subunit D-2 from Drosophila grimshawi (Hawaiian fruit fly).